The chain runs to 407 residues: Cytochrome P450-pinF2, plant-inducible (407 aa).

Cys356 is a heme binding site.

This sequence belongs to the cytochrome P450 family. The cofactor is heme.

Functionally, not essential for virulence, but may be involved in the detoxification of plant protective agents at the site of wounding. The protein is Cytochrome P450-pinF2, plant-inducible (cyp104) of Rhizobium radiobacter (Agrobacterium tumefaciens).